The primary structure comprises 491 residues: Cobyric acid synthase (491 aa).

One can recognise a GATase cobBQ-type domain in the interval 253–429; that stretch reads AHRVAVVRLP…WHGSLEGDAL (177 aa). The active-site Nucleophile is the Cys-334. Residue His-421 is part of the active site.

The protein belongs to the CobB/CobQ family. CobQ subfamily.

It functions in the pathway cofactor biosynthesis; adenosylcobalamin biosynthesis. In terms of biological role, catalyzes amidations at positions B, D, E, and G on adenosylcobyrinic A,C-diamide. NH(2) groups are provided by glutamine, and one molecule of ATP is hydrogenolyzed for each amidation. The chain is Cobyric acid synthase from Mycobacterium ulcerans (strain Agy99).